A 382-amino-acid polypeptide reads, in one-letter code: Mannitol-1-phosphate 5-dehydrogenase (382 aa).

3–14 (ALHFGAGNIGRG) contributes to the NAD(+) binding site.

It belongs to the mannitol dehydrogenase family.

It catalyses the reaction D-mannitol 1-phosphate + NAD(+) = beta-D-fructose 6-phosphate + NADH + H(+). The protein is Mannitol-1-phosphate 5-dehydrogenase of Salmonella enteritidis PT4 (strain P125109).